A 178-amino-acid polypeptide reads, in one-letter code: Large ribosomal subunit protein uL6 (178 aa).

It belongs to the universal ribosomal protein uL6 family. Part of the 50S ribosomal subunit.

Functionally, this protein binds to the 23S rRNA, and is important in its secondary structure. It is located near the subunit interface in the base of the L7/L12 stalk, and near the tRNA binding site of the peptidyltransferase center. This Oenococcus oeni (strain ATCC BAA-331 / PSU-1) protein is Large ribosomal subunit protein uL6.